Reading from the N-terminus, the 161-residue chain is Phosphopantetheine adenylyltransferase (161 aa).

Thr-10 contacts substrate. Residues 10 to 11 and His-18 contribute to the ATP site; that span reads TF. Substrate is bound by residues Lys-42, Met-74, and Arg-88. ATP-binding positions include 89–91, Glu-99, and 124–130; these read GLR and WSFISSS.

The protein belongs to the bacterial CoaD family. Homohexamer. Mg(2+) serves as cofactor.

Its subcellular location is the cytoplasm. It carries out the reaction (R)-4'-phosphopantetheine + ATP + H(+) = 3'-dephospho-CoA + diphosphate. Its pathway is cofactor biosynthesis; coenzyme A biosynthesis; CoA from (R)-pantothenate: step 4/5. Functionally, reversibly transfers an adenylyl group from ATP to 4'-phosphopantetheine, yielding dephospho-CoA (dPCoA) and pyrophosphate. The sequence is that of Phosphopantetheine adenylyltransferase from Serratia proteamaculans (strain 568).